Consider the following 668-residue polypeptide: Potassium-transporting ATPase ATP-binding subunit (668 aa).

4 helical membrane passes run Met31–Phe51, Phe62–Ala82, Thr213–Ile233, and Ile243–Pro263. The active-site 4-aspartylphosphate intermediate is the Asp298. ATP-binding positions include Asp335, Glu339, Phe367–Ser374, and Lys385. The Mg(2+) site is built by Asp504 and Asp508. Helical transmembrane passes span Tyr573–Leu593, Ile599–Leu619, and Ile644–Trp664.

Belongs to the cation transport ATPase (P-type) (TC 3.A.3) family. Type IA subfamily. The system is composed of three essential subunits: KdpA, KdpB and KdpC.

The protein localises to the cell membrane. The enzyme catalyses K(+)(out) + ATP + H2O = K(+)(in) + ADP + phosphate + H(+). Functionally, part of the high-affinity ATP-driven potassium transport (or Kdp) system, which catalyzes the hydrolysis of ATP coupled with the electrogenic transport of potassium into the cytoplasm. This subunit is responsible for energy coupling to the transport system and for the release of the potassium ions to the cytoplasm. This Thermoplasma volcanium (strain ATCC 51530 / DSM 4299 / JCM 9571 / NBRC 15438 / GSS1) protein is Potassium-transporting ATPase ATP-binding subunit.